The primary structure comprises 240 residues: Transmembrane emp24 domain-containing protein 6 (240 aa).

An N-terminal signal peptide occupies residues 1-21 (MSPLLFGAGLVVLNLVTSARS). The Lumenal portion of the chain corresponds to 22–200 (QKTEPLSGSG…FFLIQSNYNY (179 aa)). The 86-residue stretch at 53 to 138 (TECFWQFAHQ…SVQVYLNFGV (86 aa)) folds into the GOLD domain. N-linked (GlcNAc...) asparagine glycans are attached at residues asparagine 107 and asparagine 156. A helical transmembrane segment spans residues 201–223 (VNWWSTAQSLVIILSGILQLYFL). At 224-240 (KRLFNVPTTTDTKKPRC) the chain is on the cytoplasmic side.

This sequence belongs to the EMP24/GP25L family.

The protein localises to the endoplasmic reticulum membrane. The sequence is that of Transmembrane emp24 domain-containing protein 6 (TMED6) from Homo sapiens (Human).